We begin with the raw amino-acid sequence, 381 residues long: Methanesulfonate monooxygenase (381 aa).

The protein belongs to the SsuD family.

It carries out the reaction an alkanesulfonate + FMNH2 + O2 = an aldehyde + FMN + sulfite + H2O + 2 H(+). Functionally, catalyzes the desulfonation of aliphatic sulfonates. Shows highest activity with methanesulfonate. This Pseudomonas aeruginosa (strain ATCC 15692 / DSM 22644 / CIP 104116 / JCM 14847 / LMG 12228 / 1C / PRS 101 / PAO1) protein is Methanesulfonate monooxygenase (msuD).